The primary structure comprises 446 residues: MELLLSGCEAIEGEPSNVLCHNLHTGTLVSTFRQSSPAKNATCTTLNHLLSAQHTRPQLNIHNFGKEILDQSIILPEILICVQSSPCGSWLAAGTEKGNLYIWSLKSGALIYFFRAHYQPLTILKFSNDGMVLFTASNDGDVFAWLISTLVDQNSTFETSNSSVKAISHFSGHKRSIVSMEIGPGPIVSGRLYTASEDNTIRIWDVSTGNLLTTIALPSTPSCMTVDPSERVVYVGNEKGIIWIPLYTGSSTFSNNVKEKKRVTSVDNTTIPNAIGGMGRVVDYNDSRESSIISCQSPITTLTVSFDASLLISGDKDGNVLVWDSVSRQVLRRLVQYYSPVSFLQCKVDKISFYSNSSLSFPVLKRMITNEYLNSDVRICIQDDGVEQLMQPENILKISSDIVTQGSESSWRAKAETSEMQLKEAKRLFYELKQIHQALWEKYLQK.

WD repeat units follow at residues 74–113, 116–155, 172–214, 216–257, and 294–333; these read ILPE…LIYF, AHYQ…DQNS, GHKR…LLTT, ALPS…SNNV, and SCQS…VLRR.

Belongs to the WD repeat IPI3/WDR18 family. Component of the RIX1 complex, composed of ipi1, rix1/ipi2 and crb3/ipi3 in a 1:2:2 stoichiometry. The complex interacts (via rix1) with mdn1 (via its hexameric AAA ATPase ring) and the pre-60S ribosome particles. Interacts with rix1, gcr3 and Las1.

Its subcellular location is the nucleus. The protein localises to the chromosome. In terms of biological role, required for both pre-rRNA processing and heterochromatic gene silencing. Component of the RIX1 complex required for processing of ITS2 sequences from 35S pre-rRNA. The protein is Pre-rRNA-processing protein crb3/ipi3 (crb3) of Schizosaccharomyces pombe (strain 972 / ATCC 24843) (Fission yeast).